The following is a 576-amino-acid chain: Sulfite reductase [NADPH] hemoprotein beta-component (576 aa).

[4Fe-4S] cluster-binding residues include Cys435, Cys441, Cys480, and Cys484. Cys484 serves as a coordination point for siroheme.

Belongs to the nitrite and sulfite reductase 4Fe-4S domain family. In terms of assembly, alpha(8)-beta(8). The alpha component is a flavoprotein, the beta component is a hemoprotein. Siroheme is required as a cofactor. It depends on [4Fe-4S] cluster as a cofactor.

The catalysed reaction is hydrogen sulfide + 3 NADP(+) + 3 H2O = sulfite + 3 NADPH + 4 H(+). It participates in sulfur metabolism; hydrogen sulfide biosynthesis; hydrogen sulfide from sulfite (NADPH route): step 1/1. In terms of biological role, component of the sulfite reductase complex that catalyzes the 6-electron reduction of sulfite to sulfide. This is one of several activities required for the biosynthesis of L-cysteine from sulfate. The protein is Sulfite reductase [NADPH] hemoprotein beta-component of Yersinia pseudotuberculosis serotype IB (strain PB1/+).